Reading from the N-terminus, the 336-residue chain is Tryptophan--tRNA ligase (336 aa).

Residues 15–17 (QPT) and 24–25 (GN) each bind ATP. A 'HIGH' region motif is present at residues 16–25 (PTSDSLHLGN). D141 lines the L-tryptophan pocket. ATP-binding positions include 153–155 (GED), I192, and 201–205 (KMSKS). The 'KMSKS' region signature appears at 201 to 205 (KMSKS).

It belongs to the class-I aminoacyl-tRNA synthetase family. Homodimer.

Its subcellular location is the cytoplasm. The enzyme catalyses tRNA(Trp) + L-tryptophan + ATP = L-tryptophyl-tRNA(Trp) + AMP + diphosphate + H(+). Functionally, catalyzes the attachment of tryptophan to tRNA(Trp). This Mycobacterium tuberculosis (strain CDC 1551 / Oshkosh) protein is Tryptophan--tRNA ligase.